The chain runs to 151 residues: UPF0098 protein MTH_273 (151 aa).

Belongs to the UPF0098 family.

The chain is UPF0098 protein MTH_273 from Methanothermobacter thermautotrophicus (strain ATCC 29096 / DSM 1053 / JCM 10044 / NBRC 100330 / Delta H) (Methanobacterium thermoautotrophicum).